Here is a 212-residue protein sequence, read N- to C-terminus: Protein-L-isoaspartate O-methyltransferase (212 aa).

The active site involves S60.

Belongs to the methyltransferase superfamily. L-isoaspartyl/D-aspartyl protein methyltransferase family.

It localises to the cytoplasm. It carries out the reaction [protein]-L-isoaspartate + S-adenosyl-L-methionine = [protein]-L-isoaspartate alpha-methyl ester + S-adenosyl-L-homocysteine. Functionally, catalyzes the methyl esterification of L-isoaspartyl residues in peptides and proteins that result from spontaneous decomposition of normal L-aspartyl and L-asparaginyl residues. It plays a role in the repair and/or degradation of damaged proteins. The polypeptide is Protein-L-isoaspartate O-methyltransferase (Methanococcus maripaludis (strain C6 / ATCC BAA-1332)).